We begin with the raw amino-acid sequence, 101 residues long: NADH-quinone oxidoreductase subunit K (101 aa).

A run of 3 helical transmembrane segments spans residues 4 to 24 (LTHY…GIFM), 30 to 50 (LVLL…FIAF), and 61 to 81 (IFVF…LAIM).

It belongs to the complex I subunit 4L family. In terms of assembly, NDH-1 is composed of 14 different subunits. Subunits NuoA, H, J, K, L, M, N constitute the membrane sector of the complex.

It is found in the cell inner membrane. The catalysed reaction is a quinone + NADH + 5 H(+)(in) = a quinol + NAD(+) + 4 H(+)(out). Its function is as follows. NDH-1 shuttles electrons from NADH, via FMN and iron-sulfur (Fe-S) centers, to quinones in the respiratory chain. The immediate electron acceptor for the enzyme in this species is believed to be ubiquinone. Couples the redox reaction to proton translocation (for every two electrons transferred, four hydrogen ions are translocated across the cytoplasmic membrane), and thus conserves the redox energy in a proton gradient. In Neisseria meningitidis serogroup B (strain ATCC BAA-335 / MC58), this protein is NADH-quinone oxidoreductase subunit K.